The primary structure comprises 405 residues: Phosphopentomutase (405 aa).

Mn(2+) contacts are provided by aspartate 10, aspartate 303, histidine 308, aspartate 344, histidine 345, and histidine 356.

It belongs to the phosphopentomutase family. Mn(2+) serves as cofactor.

Its subcellular location is the cytoplasm. It carries out the reaction 2-deoxy-alpha-D-ribose 1-phosphate = 2-deoxy-D-ribose 5-phosphate. The catalysed reaction is alpha-D-ribose 1-phosphate = D-ribose 5-phosphate. The protein operates within carbohydrate degradation; 2-deoxy-D-ribose 1-phosphate degradation; D-glyceraldehyde 3-phosphate and acetaldehyde from 2-deoxy-alpha-D-ribose 1-phosphate: step 1/2. Its function is as follows. Isomerase that catalyzes the conversion of deoxy-ribose 1-phosphate (dRib-1-P) and ribose 1-phosphate (Rib-1-P) to deoxy-ribose 5-phosphate (dRib-5-P) and ribose 5-phosphate (Rib-5-P), respectively. This chain is Phosphopentomutase, found in Shewanella frigidimarina (strain NCIMB 400).